We begin with the raw amino-acid sequence, 102 residues long: Spexin prohormone 1 (102 aa).

The first 26 residues, 1-26, serve as a signal peptide directing secretion; the sequence is MKDLRTLAAYALALLLLATFVSYSRS. The propeptide occupies 27-35; that stretch reads APMGSFQRR. At Gln49 the chain carries Glutamine amide. Positions 50 to 102 are excised as a propeptide; sequence GRRFVSEDRNEGDLYDTIRLESQSQNTENLSISKAAAFLLNVLQQARDEGEPY.

It belongs to the spexin family. Expressed in the anterior hypothalamus, ventromedial thalamic nucleus and medial longitudinal fasciculus of the brain (at protein level). Widely expressed. Expressed predominantly in the spleen, kidney, liver and testis. Expressed in olfactory bulb, pituitary, telencephalon, diencephalons, spinal cord, optic tectum, cerebellum and hypothalamus of the brain.

It localises to the secreted. Its subcellular location is the extracellular space. The protein resides in the cytoplasmic vesicle. The protein localises to the secretory vesicle. Its function is as follows. Plays a role in the regulation of food intake and body weight and in reproduction. May also play a role as a central modulator of cardiovascular and renal function and nociception. Functionally, brain administration of the peptide inhibits food consumption. May function as a satiety factor for feeding control. Involved in the negative regulation of the reproductive axis by inhibiting luteinizing hormone secretion from pituitary cells. The protein is Spexin prohormone 1 (spx) of Carassius auratus (Goldfish).